A 1873-amino-acid polypeptide reads, in one-letter code: Ankyrin repeat domain-containing protein 31 (1873 aa).

Disordered regions lie at residues methionine 1–glutamate 27 and glutamate 361–threonine 380. The span at glutamate 361–glutamate 379 shows a compositional bias: polar residues. ANK repeat units follow at residues phenylalanine 488 to glutamine 517, alanine 521 to isoleucine 550, and tyrosine 554 to phenylalanine 583. Positions threonine 707 to valine 740 are disordered. Basic residues predominate over residues isoleucine 728 to arginine 737. 3 ANK repeats span residues arginine 1154–leucine 1183, alanine 1187–cysteine 1216, and aspartate 1220–glutamine 1249. Disordered stretches follow at residues glutamine 1242–aspartate 1263, arginine 1449–methionine 1482, phenylalanine 1512–proline 1549, and cysteine 1606–serine 1634. The span at lysine 1250–aspartate 1263 shows a compositional bias: basic and acidic residues. Composition is skewed to polar residues over residues glutamate 1460–methionine 1482 and asparagine 1515–aspartate 1525. Residues arginine 1535 to lysine 1544 are compositionally biased toward basic and acidic residues. The span at lysine 1621–serine 1632 shows a compositional bias: polar residues. Positions lysine 1683–tyrosine 1778 constitute an RAMA domain.

Interacts with REC114; the interaction is direct. Interacts with IHO1.

The protein resides in the nucleus. The protein localises to the chromosome. Its function is as follows. Required for DNA double-strand breaks (DSBs) formation during meiotic recombination. Regulates the spatial and temporal patterns of pre-DSB recombinosome assembly and recombination activity by acting as a scaffold that anchors REC114 and other factors to specific genomic locations, thereby regulating DSB formation. Plays a key role in recombination in the pseudoautosomal regions of sex chromosomes. This Homo sapiens (Human) protein is Ankyrin repeat domain-containing protein 31.